A 134-amino-acid chain; its full sequence is UPF0102 protein Rmet_3430 (134 aa).

This sequence belongs to the UPF0102 family.

This is UPF0102 protein Rmet_3430 from Cupriavidus metallidurans (strain ATCC 43123 / DSM 2839 / NBRC 102507 / CH34) (Ralstonia metallidurans).